Consider the following 856-residue polypeptide: MPRKATTPMMEQYYQIKDQYPDAFLFYRVGDFYELYEDDAIKGSQILELTLTHRSNKSENPIPMAGVPHMAVDSYVNTLVEKGYKVAICEQLEDPKKAKGMVKRGIIQLVTPGTKMAQGPDDSQESNYLTSVVEKAGGYGLAYSDLSTGEIFVTHVKHYAEVVNELLSLRTREVVFAGNLSASDRDRLQKANITVSEPAELEGEHAEISYVQQKLTDSMEKAAVRQLVVYLLATQKRSLAHLQVAESFEIGQYLQMANTVQRNLELTQSATTGRKQGSLFWVLDKTTTAMGGRLLKQWLSRPLLSLDRIKQRQQMVQALLDDYFTRENIVDSLKGVYDLERLSGRVAFGNVNPRELLQLAKSLEATKLIIQTLVESGNPDLEKYGQGIDPQSELAESITNCLVDQPPISAKDGGIIRAGVSEDLDKYREAMNGGKKWLAQMEMEERQRTGIDNLKIGYNRVFGYFIQVSKGNVAKVPQDRYTRKQTLTNAERYITPELKEHENLILEAESRSTDLEYELFSQLREAVKAHIPDLQELGRQLAALDVFVAFAQDAEEKNYCRPSFSSKNEIAVKNGRHPVVEAVLPAGSYIPNDLVMDEDTSIYLITGPNMSGKSTYMRQLALIAIMAQIGSFVPADSAKLPVFDQIFTRIGAADDLYSGKSTFMVEMSEANEALQHASSRSLVLFDEIGRGTATYDGMALAGAIIKYLHDKVGAKTLFATHYHELTELDETLLHLKNIHVGATEENGKLIFLHKILPGPADQSYGIHVAKLAGLPRAVLREASSMLKRLEAEGAREINPSRQQLDLFSPVEVVEENPLKAEQEELLDEISQVNLNEKTPLEVMQLVADWQQALKEE.

An ATP-binding site is contributed by 607–614 (GPNMSGKS).

It belongs to the DNA mismatch repair MutS family.

In terms of biological role, this protein is involved in the repair of mismatches in DNA. It is possible that it carries out the mismatch recognition step. This protein has a weak ATPase activity. This chain is DNA mismatch repair protein MutS, found in Lactobacillus delbrueckii subsp. bulgaricus (strain ATCC BAA-365 / Lb-18).